A 406-amino-acid chain; its full sequence is Tryptophan synthase beta chain (406 aa).

Residue Lys-99 is modified to N6-(pyridoxal phosphate)lysine.

This sequence belongs to the TrpB family. Tetramer of two alpha and two beta chains. Pyridoxal 5'-phosphate serves as cofactor.

The catalysed reaction is (1S,2R)-1-C-(indol-3-yl)glycerol 3-phosphate + L-serine = D-glyceraldehyde 3-phosphate + L-tryptophan + H2O. Its pathway is amino-acid biosynthesis; L-tryptophan biosynthesis; L-tryptophan from chorismate: step 5/5. Its function is as follows. The beta subunit is responsible for the synthesis of L-tryptophan from indole and L-serine. The polypeptide is Tryptophan synthase beta chain (Rhizobium leguminosarum bv. trifolii (strain WSM2304)).